Reading from the N-terminus, the 42-residue chain is Mating-type M-specific polypeptide Mi (42 aa).

The protein localises to the cytoplasm. The protein resides in the nucleus. Its function is as follows. Mating type proteins are sequence specific DNA-binding proteins that act as master switches in yeast differentiation by controlling gene expression in a cell type-specific fashion. Required for meiosis, but plays no role in conjugation. The protein is Mating-type M-specific polypeptide Mi (mat1-Mi) of Schizosaccharomyces pombe (strain 972 / ATCC 24843) (Fission yeast).